The chain runs to 310 residues: VTGSCVVTGSCVVTDSCVVTGSCGNTRTVTTQESVTTQEPVTIEEPVTTQEPVTIEEPVTTQEPVTIEEPVTTQEPVTTQEPVTTQEPVTTQEPVTTQEPVTVEEHIDEKKGSEGDNISLSSLSEETEEKSHTKKKKSSWLKFGRGNKNDKKSKNEKKPSLESVKQNADEQKEQPTDSQISVNAQDSVTIQEPTATQEPPTTQELTATQEPTTTQETVTEQEPTTTQETVTAQEPITTQEPVTAQEPVTTQELIATQEPSTTQEHADEKKASEGDNISLSRLSEETEEKSHTKKKSSWLKFGRGNKNDKK.

A 4 X 6 AA tandem repeats of V-V-T-G-S-C region spans residues 1 to 23 (VTGSCVVTGSCVVTDSCVVTGSC). Positions 29–106 (VTTQESVTTQ…TQEPVTVEEH (78 aa)) are 13 X 6 AA tandem repeats of V-V-[TI]-[QE]-E-[PH]. Low complexity predominate over residues 53-101 (VTIEEPVTTQEPVTIEEPVTTQEPVTTQEPVTTQEPVTTQEPVTTQEPV). Positions 53-310 (VTIEEPVTTQ…FGRGNKNDKK (258 aa)) are disordered. Basic and acidic residues-rich tracts occupy residues 103–114 (VEEHIDEKKGSE) and 147–160 (NKNDKKSKNEKKPS). One copy of the 45 AA repeat 1 repeat lies at 107–152 (IDEKKGSEGDNISLSSLSEETEEKSHTKKKKSSWLKFGRGNKNDKK). Over residues 176-190 (TDSQISVNAQDSVTI) the composition is skewed to polar residues. Residues 188-265 (VTIQEPTATQ…TQEPSTTQEH (78 aa)) form a 13 X 6 AA approximate tandem repeats region. Low complexity predominate over residues 191–235 (QEPTATQEPPTTQELTATQEPTTTQETVTEQEPTTTQETVTAQEP). Residues 236–263 (ITTQEPVTAQEPVTTQELIATQEPSTTQ) are compositionally biased toward polar residues. Residues 264–273 (EHADEKKASE) show a composition bias toward basic and acidic residues. The stretch at 266–310 (ADEKKASEGDNISLSRLSEETEEKSHTKKKSSWLKFGRGNKNDKK) is one 45 AA repeat 2 repeat.

The protein is 300 kDa antigen AG231 (FIRA) of Plasmodium falciparum (isolate FC27 / Papua New Guinea).